A 769-amino-acid polypeptide reads, in one-letter code: Homoaconitase, mitochondrial (769 aa).

The transit peptide at 1–28 directs the protein to the mitochondrion; the sequence is MQSRLLPSGPGRRWISLRVPNTPQRRAF. Cys-391, Cys-460, and Cys-463 together coordinate [4Fe-4S] cluster.

The protein belongs to the aconitase/IPM isomerase family. [4Fe-4S] cluster serves as cofactor.

Its subcellular location is the mitochondrion. It catalyses the reaction (2R,3S)-homoisocitrate = cis-homoaconitate + H2O. It functions in the pathway amino-acid biosynthesis; L-lysine biosynthesis via AAA pathway; L-alpha-aminoadipate from 2-oxoglutarate: step 3/5. Catalyzes the reversible hydration of cis-homoaconitate to (2R,3S)-homoisocitrate, a step in the alpha-aminoadipate pathway for lysine biosynthesis. This Aspergillus niger (strain ATCC MYA-4892 / CBS 513.88 / FGSC A1513) protein is Homoaconitase, mitochondrial (lysA).